The following is a 360-amino-acid chain: Phospho-N-acetylmuramoyl-pentapeptide-transferase (360 aa).

The next 10 membrane-spanning stretches (helical) occupy residues 27 to 47 (IVSL…LIGW), 72 to 92 (PTMG…MWAY), 94 to 114 (SNPY…VGFV), 132 to 152 (WKYF…YCIG), 168 to 188 (IMPQ…VGTS), 199 to 219 (GLAI…AWAT), 236 to 256 (AGEL…FLWF), 263 to 283 (VFMG…IAVL), 288 to 308 (FLLV…ILQV), and 338 to 358 (VIVR…ATLK).

It belongs to the glycosyltransferase 4 family. MraY subfamily. Mg(2+) is required as a cofactor.

Its subcellular location is the cell inner membrane. It catalyses the reaction UDP-N-acetyl-alpha-D-muramoyl-L-alanyl-gamma-D-glutamyl-meso-2,6-diaminopimeloyl-D-alanyl-D-alanine + di-trans,octa-cis-undecaprenyl phosphate = di-trans,octa-cis-undecaprenyl diphospho-N-acetyl-alpha-D-muramoyl-L-alanyl-D-glutamyl-meso-2,6-diaminopimeloyl-D-alanyl-D-alanine + UMP. It functions in the pathway cell wall biogenesis; peptidoglycan biosynthesis. Its function is as follows. Catalyzes the initial step of the lipid cycle reactions in the biosynthesis of the cell wall peptidoglycan: transfers peptidoglycan precursor phospho-MurNAc-pentapeptide from UDP-MurNAc-pentapeptide onto the lipid carrier undecaprenyl phosphate, yielding undecaprenyl-pyrophosphoryl-MurNAc-pentapeptide, known as lipid I. The chain is Phospho-N-acetylmuramoyl-pentapeptide-transferase from Edwardsiella ictaluri (strain 93-146).